Here is a 246-residue protein sequence, read N- to C-terminus: Uridylate kinase (246 aa).

16–19 (KFSG) contributes to the ATP binding site. UMP is bound at residue Gly-58. Residues Gly-59 and Arg-63 each contribute to the ATP site. UMP contacts are provided by residues Asp-78 and 139–146 (TGNPFFTT). The ATP site is built by Thr-166, Tyr-172, and Asp-175.

It belongs to the UMP kinase family. As to quaternary structure, homohexamer.

Its subcellular location is the cytoplasm. It catalyses the reaction UMP + ATP = UDP + ADP. It participates in pyrimidine metabolism; CTP biosynthesis via de novo pathway; UDP from UMP (UMPK route): step 1/1. Its activity is regulated as follows. Inhibited by UTP. Its function is as follows. Catalyzes the reversible phosphorylation of UMP to UDP. The chain is Uridylate kinase from Legionella pneumophila (strain Corby).